The primary structure comprises 784 residues: Transcriptional activator somA (784 aa).

The LisH domain occupies 43–75 (MINNLNTYIYDYFLKRGYHECARALVKDESIKL). Positions 75-84 (LNTEPPTKTS) are enriched in polar residues. 4 disordered regions span residues 75–122 (LNTE…PNLA), 212–295 (GLSQ…SQAL), 424–726 (MMAR…DLSI), and 764–784 (GFDPNISYPTDGVETGAGDGL). Positions 103–117 (DSKDGDKIKIPDDLP) are enriched in basic and acidic residues. The segment covering 215–233 (QQQIAQLQKNQQMHMMQQM) has biased composition (low complexity). Residues 234–244 (QREHSDMDMNG) are compositionally biased toward basic and acidic residues. Residues 247–259 (PQSPSSAENAPSP) are compositionally biased toward low complexity. Positions 453–467 (SPQGSRAGTSPNPNE) are enriched in polar residues. The span at 564–592 (QQQQGQPMGPQQSPAQQPQSTGTPQTQNS) shows a compositional bias: low complexity. Residues 607–624 (RTSPQSQNAAPPTPQQAN) are compositionally biased toward polar residues. Positions 629–638 (KKREPKDTAR) are enriched in basic and acidic residues. Composition is skewed to low complexity over residues 644-661 (KQPAAAAAAANTAATPSS) and 691-701 (PTTSAPQQPTS). Pro residues predominate over residues 702-715 (APAPQPIVQQPPPD).

It belongs to the FLO8 family. As to quaternary structure, interacts with ptaB.

The protein localises to the nucleus. Its function is as follows. Transcription factor that controls the expression of genes related to the process of conidiation and adherence and regulates biofilm formation. Controls conidiation and adhesion primarily by affecting the expression of the three regulatory genes flbB, stuA and medA. Required for virulence in an egg and a mouse infection model. The polypeptide is Transcriptional activator somA (Aspergillus fumigatus (strain ATCC MYA-4609 / CBS 101355 / FGSC A1100 / Af293) (Neosartorya fumigata)).